Reading from the N-terminus, the 512-residue chain is Pentatricopeptide repeat-containing protein At1g64583, mitochondrial (512 aa).

The N-terminal 34 residues, 1 to 34, are a transit peptide targeting the mitochondrion; the sequence is MRRLIVTGIATSTAKGFRRVVNPNLLGGGAAARA. 12 PPR repeats span residues 70 to 104, 105 to 139, 140 to 174, 175 to 209, 210 to 244, 245 to 279, 280 to 314, 315 to 349, 350 to 384, 385 to 415, 420 to 454, and 455 to 489; these read SIVD…GISH, DLYS…GYEP, SIVT…GYEP, NVVV…GLGA, DVVT…SINP, DVVT…SVDP, NNVT…GCFP, NVVT…GFNA, DIFT…RVTP, DIIT…MRES, GIVA…GVKP, and DART…GIIC.

The protein belongs to the PPR family. P subfamily.

Its subcellular location is the mitochondrion. This Arabidopsis thaliana (Mouse-ear cress) protein is Pentatricopeptide repeat-containing protein At1g64583, mitochondrial.